A 171-amino-acid polypeptide reads, in one-letter code: MWNSLKTMWIVFLHMFRRRVTIQYPDEMPNIPPRWRGRIILSRDPDGEERCVACYLCAAACPVDCIALQATEDEHERRYPEFFRINFSRCIFCGFCEEACPTDAIQLTPDFEMGEYNRKNLVYEKEDLLIDGTGKYPGYNFYRVAGVAIGGKNKGGAENEAPPVDPHSLLP.

4Fe-4S ferredoxin-type domains follow at residues 41–71 (LSRDPDGEERCVACYLCAAACPVDCIALQAT) and 81–110 (EFFRINFSRCIFCGFCEEACPTDAIQLTPD). 8 residues coordinate [4Fe-4S] cluster: Cys51, Cys54, Cys57, Cys61, Cys90, Cys93, Cys96, and Cys100.

The protein belongs to the complex I 23 kDa subunit family. As to quaternary structure, NDH-1 is composed of 14 different subunits. Subunits NuoA, H, J, K, L, M, N constitute the membrane sector of the complex. Requires [4Fe-4S] cluster as cofactor.

It localises to the cell inner membrane. The enzyme catalyses a quinone + NADH + 5 H(+)(in) = a quinol + NAD(+) + 4 H(+)(out). Functionally, NDH-1 shuttles electrons from NADH, via FMN and iron-sulfur (Fe-S) centers, to quinones in the respiratory chain. The immediate electron acceptor for the enzyme in this species is believed to be ubiquinone. Couples the redox reaction to proton translocation (for every two electrons transferred, four hydrogen ions are translocated across the cytoplasmic membrane), and thus conserves the redox energy in a proton gradient. The polypeptide is NADH-quinone oxidoreductase subunit I 1 (Nitrosospira multiformis (strain ATCC 25196 / NCIMB 11849 / C 71)).